A 92-amino-acid chain; its full sequence is Neurophysin 2 (92 aa).

7 cysteine pairs are disulfide-bonded: C10-C54, C13-C27, C21-C44, C28-C34, C61-C73, C67-C85, and C74-C79.

It belongs to the vasopressin/oxytocin family. There is an equilibrium between the monomeric and dimeric forms. On peptide binding the dimeric form predominates. Post-translationally, a shorter neurophysin molecule (1-90) also exists and is probably derived from the complete protein by proteolytic degradation (in vivo or after extraction).

Its subcellular location is the secreted. Functionally, neurophysin 2 specifically binds vasopressin. This Loxodonta africana (African elephant) protein is Neurophysin 2 (AVP).